Here is a 204-residue protein sequence, read N- to C-terminus: Urease accessory protein UreG (204 aa).

12 to 19 (GPVGSGKT) contributes to the GTP binding site.

This sequence belongs to the SIMIBI class G3E GTPase family. UreG subfamily. As to quaternary structure, homodimer. UreD, UreF and UreG form a complex that acts as a GTP-hydrolysis-dependent molecular chaperone, activating the urease apoprotein by helping to assemble the nickel containing metallocenter of UreC. The UreE protein probably delivers the nickel.

The protein localises to the cytoplasm. In terms of biological role, facilitates the functional incorporation of the urease nickel metallocenter. This process requires GTP hydrolysis, probably effectuated by UreG. The protein is Urease accessory protein UreG of Pseudomonas fluorescens (strain SBW25).